Consider the following 225-residue polypeptide: Endonuclease V (225 aa).

2 residues coordinate Mg(2+): D43 and D110.

This sequence belongs to the endonuclease V family. Requires Mg(2+) as cofactor.

Its subcellular location is the cytoplasm. It catalyses the reaction Endonucleolytic cleavage at apurinic or apyrimidinic sites to products with a 5'-phosphate.. DNA repair enzyme involved in the repair of deaminated bases. Selectively cleaves double-stranded DNA at the second phosphodiester bond 3' to a deoxyinosine leaving behind the intact lesion on the nicked DNA. The chain is Endonuclease V from Thermotoga petrophila (strain ATCC BAA-488 / DSM 13995 / JCM 10881 / RKU-1).